The chain runs to 421 residues: Gamma-glutamyl phosphate reductase (421 aa).

This sequence belongs to the gamma-glutamyl phosphate reductase family.

Its subcellular location is the cytoplasm. It catalyses the reaction L-glutamate 5-semialdehyde + phosphate + NADP(+) = L-glutamyl 5-phosphate + NADPH + H(+). It participates in amino-acid biosynthesis; L-proline biosynthesis; L-glutamate 5-semialdehyde from L-glutamate: step 2/2. Functionally, catalyzes the NADPH-dependent reduction of L-glutamate 5-phosphate into L-glutamate 5-semialdehyde and phosphate. The product spontaneously undergoes cyclization to form 1-pyrroline-5-carboxylate. The protein is Gamma-glutamyl phosphate reductase of Pseudomonas paraeruginosa (strain DSM 24068 / PA7) (Pseudomonas aeruginosa (strain PA7)).